Here is a 173-residue protein sequence, read N- to C-terminus: RNA pyrophosphohydrolase (173 aa).

Residues 13–166 (PYRPCVGLMI…KRKVYEEVVA (154 aa)) enclose the Nudix hydrolase domain. The Nudix box signature appears at 54–75 (GGIDKGEEPLQAAERELYEETG).

This sequence belongs to the Nudix hydrolase family. RppH subfamily. A divalent metal cation is required as a cofactor.

Accelerates the degradation of transcripts by removing pyrophosphate from the 5'-end of triphosphorylated RNA, leading to a more labile monophosphorylated state that can stimulate subsequent ribonuclease cleavage. This is RNA pyrophosphohydrolase from Mesorhizobium japonicum (strain LMG 29417 / CECT 9101 / MAFF 303099) (Mesorhizobium loti (strain MAFF 303099)).